We begin with the raw amino-acid sequence, 297 residues long: Protease HtpX homolog (297 aa).

Helical transmembrane passes span 14-34 (IVLLFVFFILVALVGAAVGYL) and 38-58 (SLETGVVAAIVIGAIYTIIMV). Position 144 (histidine 144) interacts with Zn(2+). The active site involves glutamate 145. Histidine 148 is a binding site for Zn(2+). The next 2 helical transmembrane spans lie at 159 to 179 (IALALAAAITLLTNIGGNWWF) and 199 to 219 (ILLLVFSILMMVLAPLAAAAI). Glutamate 228 lines the Zn(2+) pocket.

Belongs to the peptidase M48B family. Requires Zn(2+) as cofactor.

The protein localises to the cell membrane. The chain is Protease HtpX homolog from Leuconostoc mesenteroides subsp. mesenteroides (strain ATCC 8293 / DSM 20343 / BCRC 11652 / CCM 1803 / JCM 6124 / NCDO 523 / NBRC 100496 / NCIMB 8023 / NCTC 12954 / NRRL B-1118 / 37Y).